Reading from the N-terminus, the 502-residue chain is Ribose import ATP-binding protein RbsA (502 aa).

ABC transporter domains follow at residues 6 to 242 (IDMT…IARD) and 253 to 496 (ALGA…SGAR). ATP is bound at residue 38-45 (GQNGAGKS).

Belongs to the ABC transporter superfamily. Ribose importer (TC 3.A.1.2.1) family. In terms of assembly, the complex is composed of an ATP-binding protein (RbsA), two transmembrane proteins (RbsC) and a solute-binding protein (RbsB).

The protein localises to the cell inner membrane. It carries out the reaction D-ribose(out) + ATP + H2O = D-ribose(in) + ADP + phosphate + H(+). Functionally, part of the ABC transporter complex RbsABC involved in ribose import. Responsible for energy coupling to the transport system. This Cereibacter sphaeroides (strain ATCC 17023 / DSM 158 / JCM 6121 / CCUG 31486 / LMG 2827 / NBRC 12203 / NCIMB 8253 / ATH 2.4.1.) (Rhodobacter sphaeroides) protein is Ribose import ATP-binding protein RbsA.